A 29-amino-acid polypeptide reads, in one-letter code: Cuticle protein 36 (29 aa).

Functionally, component of the cuticle of migratory locust which contains more than 100 different structural proteins. The protein is Cuticle protein 36 of Locusta migratoria (Migratory locust).